The following is a 691-amino-acid chain: Elongation factor G (691 aa).

A tr-type G domain is found at 8 to 283 (EDYRNFGIMA…AVVDYLPSPV (276 aa)). GTP is bound by residues 17-24 (AHIDAGKT), 81-85 (DTPGH), and 135-138 (NKMD).

It belongs to the TRAFAC class translation factor GTPase superfamily. Classic translation factor GTPase family. EF-G/EF-2 subfamily.

It is found in the cytoplasm. Functionally, catalyzes the GTP-dependent ribosomal translocation step during translation elongation. During this step, the ribosome changes from the pre-translocational (PRE) to the post-translocational (POST) state as the newly formed A-site-bound peptidyl-tRNA and P-site-bound deacylated tRNA move to the P and E sites, respectively. Catalyzes the coordinated movement of the two tRNA molecules, the mRNA and conformational changes in the ribosome. The sequence is that of Elongation factor G from Methylorubrum populi (strain ATCC BAA-705 / NCIMB 13946 / BJ001) (Methylobacterium populi).